The following is a 350-amino-acid chain: MELLESALAKIQPVDEALLTEAQAKLDNKTKPPGSLGLLEEMARRFAAITGDLSPKMGKKVIFTFAGDHGIVEEGVSLFPKEVTPQMVLNFLRGGAGVNVLARHAGAEVRVVDVGVDYDFEPTEGLIIRKIAKGTRNFAKESAMTREEAVAAIEVGIALADRAKAEGISMVGTGEMGIGNTSPSSAIIAAFAGCSVREVTHRGTGIGDQALEHKIKVIQAGLDLNRPNPEDPLDVLSKVGGLEIAGIAGLVLGAAANRIPVVVDGFISTAGALIACEMHPNVREYIFAAHNSVEIGHQMMLQRIGAKPILDLQLRLGEGTGAALAMGLIEAGVKVLNEMATFEEAGVASS.

Residue glutamate 318 is the Proton acceptor of the active site.

This sequence belongs to the CobT family.

It carries out the reaction 5,6-dimethylbenzimidazole + nicotinate beta-D-ribonucleotide = alpha-ribazole 5'-phosphate + nicotinate + H(+). Its pathway is nucleoside biosynthesis; alpha-ribazole biosynthesis; alpha-ribazole from 5,6-dimethylbenzimidazole: step 1/2. In terms of biological role, catalyzes the synthesis of alpha-ribazole-5'-phosphate from nicotinate mononucleotide (NAMN) and 5,6-dimethylbenzimidazole (DMB). This is Nicotinate-nucleotide--dimethylbenzimidazole phosphoribosyltransferase from Citrifermentans bemidjiense (strain ATCC BAA-1014 / DSM 16622 / JCM 12645 / Bem) (Geobacter bemidjiensis).